Consider the following 217-residue polypeptide: Probable septum site-determining protein MinC (217 aa).

It belongs to the MinC family. In terms of assembly, interacts with MinD and FtsZ.

Functionally, cell division inhibitor that blocks the formation of polar Z ring septums. Rapidly oscillates between the poles of the cell to destabilize FtsZ filaments that have formed before they mature into polar Z rings. Prevents FtsZ polymerization. The polypeptide is Probable septum site-determining protein MinC (Pelotomaculum thermopropionicum (strain DSM 13744 / JCM 10971 / SI)).